The sequence spans 681 residues: Peroxisomal acyl-coenzyme A oxidase 2 (681 aa).

Residues 1–28 (MGNPGDRVSLGETWSREVHPDIDSERHS) form a disordered region. Ser9 bears the Phosphoserine mark. Position 13 is a phosphothreonine (Thr13). Positions 14–28 (WSREVHPDIDSERHS) are enriched in basic and acidic residues. N6-succinyllysine occurs at positions 66, 137, 303, 453, 561, and 667. Positions 679-681 (PKL) match the Microbody targeting signal motif.

Belongs to the acyl-CoA oxidase family. Homodimer. The cofactor is FAD. Post-translationally, acetylation of Lys-667 is observed in liver mitochondria from fasted mice but not from fed mice.

It is found in the peroxisome. The enzyme catalyses (25R)-3alpha,7alpha,12alpha-trihydroxy-5beta-cholestan-26-oyl-CoA + A + H2O = (24R,25R)-3alpha,7alpha,12alpha,24-tetrahydroxy-5beta-cholestan-26-oyl-CoA + AH2. It catalyses the reaction (25S)-3alpha,7alpha,12alpha-trihydroxy-5beta-cholestan-26-oyl-CoA + O2 = (24E)-3alpha,7alpha,12alpha-trihydroxy-5beta-cholest-24-en-26-oyl-CoA + H2O2. Functionally, oxidizes the CoA esters of the bile acid intermediates di- and tri-hydroxycoprostanic acids. Capable of oxidizing short as well as long chain 2-methyl branched fatty acids. The protein is Peroxisomal acyl-coenzyme A oxidase 2 of Mus musculus (Mouse).